We begin with the raw amino-acid sequence, 76 residues long: ATP synthase subunit c (76 aa).

2 consecutive transmembrane segments (helical) span residues 5 to 25 (GIIAIAAAIAAFTGIGAGIGI) and 54 to 74 (AALAEATAIYGLVVALVLVFL).

Belongs to the ATPase C chain family. F-type ATPases have 2 components, F(1) - the catalytic core - and F(0) - the membrane proton channel. F(1) has five subunits: alpha(3), beta(3), gamma(1), delta(1), epsilon(1). F(0) has three main subunits: a(1), b(2) and c(10-14). The alpha and beta chains form an alternating ring which encloses part of the gamma chain. F(1) is attached to F(0) by a central stalk formed by the gamma and epsilon chains, while a peripheral stalk is formed by the delta and b chains.

Its subcellular location is the cell membrane. Functionally, f(1)F(0) ATP synthase produces ATP from ADP in the presence of a proton or sodium gradient. F-type ATPases consist of two structural domains, F(1) containing the extramembraneous catalytic core and F(0) containing the membrane proton channel, linked together by a central stalk and a peripheral stalk. During catalysis, ATP synthesis in the catalytic domain of F(1) is coupled via a rotary mechanism of the central stalk subunits to proton translocation. In terms of biological role, key component of the F(0) channel; it plays a direct role in translocation across the membrane. A homomeric c-ring of between 10-14 subunits forms the central stalk rotor element with the F(1) delta and epsilon subunits. This Ruminiclostridium cellulolyticum (strain ATCC 35319 / DSM 5812 / JCM 6584 / H10) (Clostridium cellulolyticum) protein is ATP synthase subunit c.